The sequence spans 370 residues: NSFL1 cofactor p47 (370 aa).

The disordered stretch occupies residues 54 to 73; it reads SQATPSSVSRGTAPSDNRVT. Ser74, Ser102, Ser114, and Ser140 each carry phosphoserine. Disordered regions lie at residues 80-116 and 138-157; these read HDQD…KSPN and TKSP…GYRL. A Nuclear localization signal motif is present at residues 109–115; sequence PPRKKSP. Tyr167 carries the phosphotyrosine modification. A Nuclear localization signal motif is present at residues 172–175; sequence RRRH. A phosphoserine mark is found at Ser176, Ser192, and Ser272. The 66-residue stretch at 179-244 folds into the SEP domain; that stretch reads DVHVVLKLWK…MEDHRDEDFV (66 aa). Residues 291 to 368 form the UBX domain; that stretch reads EAEPTTNIQI…NLLNAVIVQR (78 aa).

It belongs to the NSFL1C family. In terms of assembly, part of a ternary complex containing STX5A, NSFL1C and VCP. NSFL1C forms a homotrimer that binds to one end of a VCP homohexamer. The complex binds to membranes enriched in phosphatidylethanolamine-containing lipids and promotes Golgi membrane fusion. Interaction with VCIP135 leads to dissociation of the complex via ATP hydrolysis by VCP. Binds ubiquitin and mono-ubiquitinated proteins via its N-terminal UBA-like domain when bound to VCP. Phosphorylated during mitosis. Phosphorylation inhibits interaction with Golgi membranes and is required for the fragmentation of the Golgi stacks during mitosis.

It is found in the nucleus. The protein resides in the golgi apparatus. Its subcellular location is the golgi stack. It localises to the chromosome. The protein localises to the cytoplasm. It is found in the cytoskeleton. The protein resides in the microtubule organizing center. Its subcellular location is the centrosome. In terms of biological role, reduces the ATPase activity of VCP. Necessary for the fragmentation of Golgi stacks during mitosis and for VCP-mediated reassembly of Golgi stacks after mitosis. May play a role in VCP-mediated formation of transitional endoplasmic reticulum (tER). Inhibits the activity of CTSL (in vitro). Together with UBXN2B/p37, regulates the centrosomal levels of kinase AURKA/Aurora A during mitotic progression by promoting AURKA removal from centrosomes in prophase. Also, regulates spindle orientation during mitosis. The polypeptide is NSFL1 cofactor p47 (Nsfl1c) (Mus musculus (Mouse)).